A 169-amino-acid polypeptide reads, in one-letter code: Podoplanin (169 aa).

The N-terminal stretch at 1–22 (MWRVPVLLLVLGGAGLRVPAAG) is a signal peptide. Residues 23–138 (ASTVRPDDII…EKDGLATVTL (116 aa)) are Extracellular-facing. A glycan (O-linked (GalNAc...) threonine) is linked at Thr-25. The disordered stretch occupies residues 37 to 69 (DSVVTPGTEDSVVTPGAEDNVVTDGATEEPYES). Ser-38 carries O-linked (GalNAc...) serine glycosylation. O-linked (GalNAc...) threonine glycosylation is found at Thr-41 and Thr-44. Ser-47 carries O-linked (GalNAc...) serine glycosylation. O-linked (GalNAc...) threonine glycosylation is found at Thr-50, Thr-59, Thr-63, Thr-72, Thr-76, Thr-79, Thr-83, Thr-92, Thr-96, Thr-106, Thr-107, Thr-108, Thr-113, Thr-126, and Thr-127. The chain crosses the membrane as a helical span at residues 139-159 (VGIIVGVLLAIGFIGGIIIVV). The tract at residues 140 to 144 (GIIVG) is requires for dimerization and lipid rafts association. Residues 160 to 169 (ARKMSGRYSP) are Cytoplasmic-facing. A requires for interaction with MSN and EZR region spans residues 161–162 (RK).

Belongs to the podoplanin family. As to quaternary structure, homodimer. Interacts with CLEC1B; the interaction is independent of CLEC1B glycosylation and activates CLEC1B; the interaction is dependent of sialic acid on O-glycans. Interacts with CD9; this interaction is homophilic and attenuates platelet aggregation and pulmonary metastasis induced by PDPN. Interacts with LGALS8; the interaction is glycosylation-dependent; may participate in connection of the lymphatic endothelium to the surrounding extracellular matrix. Interacts with HSPA9. Interacts (via extracellular domain) with CD44; this interaction is required for PDPN-mediated directional migration and regulation of lamellipodia extension/stabilization during cell spreading and migration. Interacts (via cytoplasmic domain) with MSN and EZR; activates RHOA and promotes epithelial-mesenchymal transition. Interacts with CCL21; relocalized PDPN to the basolateral membrane. In terms of processing, extensively O-glycosylated. Contains sialic acid residues. O-glycosylation is necessary for platelet aggregation activity. Disialylated at Thr-59; sialic acid is critical for platelet-aggregating activity and for CLEC1B interaction. Post-translationally, the N-terminus is blocked.

The protein localises to the membrane. It localises to the cell projection. The protein resides in the filopodium membrane. It is found in the lamellipodium membrane. Its subcellular location is the microvillus membrane. The protein localises to the ruffle membrane. It localises to the membrane raft. The protein resides in the apical cell membrane. It is found in the basolateral cell membrane. Its subcellular location is the invadopodium. Functionally, mediates effects on cell migration and adhesion through its different partners. During development plays a role in blood and lymphatic vessels separation by binding CLEC1B, triggering CLEC1B activation in platelets and leading to platelet activation and/or aggregation. Interaction with CD9, on the contrary, attenuates platelet aggregation and pulmonary metastasis induced by PDPN. Mediates effects on cell migration and adhesion through its different partners. Through MSN or EZR interaction promotes epithelial-mesenchymal transition (EMT) leading to ERZ phosphorylation and triggering RHOA activation leading to cell migration increase and invasiveness. Interaction with CD44 promotes directional cell migration in epithelial and tumor cells. In lymph nodes (LNs), controls fibroblastic reticular cells (FRCs) adhesion to the extracellular matrix (ECM) and contraction of the actomyosin by maintaining ERM proteins (EZR; MSN and RDX) and MYL9 activation through association with unknown transmembrane proteins. Engagement of CLEC1B by PDPN promotes FRCs relaxation by blocking lateral membrane interactions leading to reduction of ERM proteins (EZR; MSN and RDX) and MYL9 activation. Through binding with LGALS8 may participate in connection of the lymphatic endothelium to the surrounding extracellular matrix. In keratinocytes, induces changes in cell morphology showing an elongated shape, numerous membrane protrusions, major reorganization of the actin cytoskeleton, increased motility and decreased cell adhesion. Controls invadopodia stability and maturation leading to efficient degradation of the extracellular matrix (ECM) in tumor cells through modulation of RHOC activity in order to activate ROCK1/ROCK2 and LIMK1/LIMK2 and inactivation of CFL1. Required for normal lung cell proliferation and alveolus formation at birth. Does not function as a water channel or as a regulator of aquaporin-type water channels. Does not have any effect on folic acid or amino acid transport. The protein is Podoplanin (PDPN) of Canis lupus familiaris (Dog).